The sequence spans 354 residues: Prephenate dehydrogenase (354 aa).

A Prephenate/arogenate dehydrogenase domain is found at 2–283; that stretch reads KKILIIGLGL…AMEIHKGALP (282 aa). Residue 3-33 participates in NAD(+) binding; the sequence is KILIIGLGLIGSSIALGIKKAHPEFEILGSD. Positions 287 to 354 constitute an ACT domain; that stretch reads DLFISVPDEK…IEKATDFTVV (68 aa).

The protein belongs to the prephenate/arogenate dehydrogenase family.

It carries out the reaction prephenate + NAD(+) = 3-(4-hydroxyphenyl)pyruvate + CO2 + NADH. Its pathway is amino-acid biosynthesis; L-tyrosine biosynthesis; (4-hydroxyphenyl)pyruvate from prephenate (NAD(+) route): step 1/1. This is Prephenate dehydrogenase (tyrA) from Lactococcus lactis subsp. cremoris (strain MG1363).